Consider the following 260-residue polypeptide: UPF0294 protein YPO1077/y3099/YP_2772 (260 aa).

Belongs to the UPF0294 family.

The protein localises to the cytoplasm. The polypeptide is UPF0294 protein YPO1077/y3099/YP_2772 (Yersinia pestis).